Consider the following 250-residue polypeptide: Small ribosomal subunit protein uS2 (250 aa).

Positions 225–250 (GAQGGRQARGEDLGAAVEAPSEDALA) are disordered.

Belongs to the universal ribosomal protein uS2 family.

This chain is Small ribosomal subunit protein uS2, found in Rhizorhabdus wittichii (strain DSM 6014 / CCUG 31198 / JCM 15750 / NBRC 105917 / EY 4224 / RW1) (Sphingomonas wittichii).